The sequence spans 83 residues: MSVTVPNDDWTLSSLSETFDDGTQTLQGELTLALDKLAKNPSNPQLLAEYQSKLSEYTLYRNAQSNTVKVIKDVDAAIIQNFR.

This sequence belongs to the SctF family. In terms of assembly, the core secretion machinery of the T3SS is composed of approximately 20 different proteins, including cytoplasmic components, a base, an export apparatus and a needle. This subunit polymerizes and forms the helical needle filament. Interacts with the needle tip protein IpaD/SctA. Interacts with the export apparatus components SpaP/SctR, SpaQ/SctS and SpaR/SctT.

The protein localises to the secreted. It is found in the cell surface. In terms of biological role, component of the type III secretion system (T3SS), also called injectisome, which is used to inject bacterial effector proteins into eukaryotic host cells. MxiH/SctF forms the external needle filament that protrudes from the bacterial surface. Its function is as follows. During infection, can induce innate immune responses. The needle proteins interact with host TLR2 or TLR4, and induce signaling by NF-kappa-B and/or AP-1. This activation is MyD88 dependent and results in increased expression of cytokines, including TNF-alpha, IL-6 and IL-8. The chain is Type 3 secretion system needle filament protein from Shigella flexneri.